The chain runs to 653 residues: Protein fem-1 homolog A (653 aa).

7 ANK repeats span residues 2–31, 40–70, 82–111, 115–145, 149–178, 182–211, and 214–243; these read DLHT…REEL, SGGT…SVEA, EGAP…SVNR, TNST…DLEV, HGHT…QVNR, KGNT…RMER, and YGMT…AGDE. Ser108 carries the phosphoserine modification. Residues 242-274 form a disordered region; sequence DEQAQPGLARVQPQGARSSPEEPPSGESYESCC. 2 TPR repeats span residues 282 to 316 and 374 to 407; these read VEAL…RHQG and SYYI…QQNN. ANK repeat units follow at residues 518 to 560 and 564 to 593; these read NGFT…DPDS and DNNT…HMDA.

It belongs to the fem-1 family. As to quaternary structure, component of a CRL2 E3 ubiquitin-protein ligase complex, also named ECS (Elongin BC-CUL2/5-SOCS-box protein) complex, composed of CUL2, Elongin BC (ELOB and ELOC), RBX1 and substrate-specific adapter FEM1A. Interacts with PTGER4. Interacts with NFKB1; the interaction is direct. Phosphorylated; highly phosphorylated in myoblasts and myotubes. Phosphorylation at Ser-108 promotes PGE2-EP4-mediated inhibition of inflammation. Dephosphorylated by protein phosphatase 2A (PP2A).

Its subcellular location is the mitochondrion. It localises to the cytoplasm. It functions in the pathway protein modification; protein ubiquitination. Functionally, substrate-recognition component of a Cul2-RING (CRL2) E3 ubiquitin-protein ligase complex of the DesCEND (destruction via C-end degrons) pathway, which recognizes a C-degron located at the extreme C terminus of target proteins, leading to their ubiquitination and degradation. The C-degron recognized by the DesCEND pathway is usually a motif of less than ten residues and can be present in full-length proteins, truncated proteins or proteolytically cleaved forms. The CRL2(FEM1A) complex specifically recognizes proteins with an arginine at the C-terminus: recognizes and binds proteins ending with -Lys/Arg-Xaa-Arg and -Lys/Arg-Xaa-Xaa-Arg C-degrons, such as SIL1 or OR51B2, leading to their ubiquitination and degradation. Involved in PGE2-EP4-mediated inhibition of inflammation of macrophages via interaction with NFKB1 and PTGER4. Promotes inflammation in brain microglia through MAP2K4/MKK4-mediated signaling. The protein is Protein fem-1 homolog A of Bos taurus (Bovine).